Consider the following 209-residue polypeptide: Uracil phosphoribosyltransferase (209 aa).

Residues R79, R104, and 131 to 139 (DPMLATGGS) each bind 5-phospho-alpha-D-ribose 1-diphosphate. Uracil-binding positions include I194 and 199-201 (GDA). D200 serves as a coordination point for 5-phospho-alpha-D-ribose 1-diphosphate.

The protein belongs to the UPRTase family. It depends on Mg(2+) as a cofactor.

The enzyme catalyses UMP + diphosphate = 5-phospho-alpha-D-ribose 1-diphosphate + uracil. Its pathway is pyrimidine metabolism; UMP biosynthesis via salvage pathway; UMP from uracil: step 1/1. Its activity is regulated as follows. Allosterically activated by GTP. Catalyzes the conversion of uracil and 5-phospho-alpha-D-ribose 1-diphosphate (PRPP) to UMP and diphosphate. This Clostridioides difficile (strain 630) (Peptoclostridium difficile) protein is Uracil phosphoribosyltransferase.